The sequence spans 473 residues: Probable glycine dehydrogenase (decarboxylating) subunit 2 (473 aa).

An N6-(pyridoxal phosphate)lysine modification is found at lysine 266.

The protein belongs to the GcvP family. C-terminal subunit subfamily. As to quaternary structure, the glycine cleavage system is composed of four proteins: P, T, L and H. In this organism, the P 'protein' is a heterodimer of two subunits. The cofactor is pyridoxal 5'-phosphate.

The catalysed reaction is N(6)-[(R)-lipoyl]-L-lysyl-[glycine-cleavage complex H protein] + glycine + H(+) = N(6)-[(R)-S(8)-aminomethyldihydrolipoyl]-L-lysyl-[glycine-cleavage complex H protein] + CO2. Functionally, the glycine cleavage system catalyzes the degradation of glycine. The P protein binds the alpha-amino group of glycine through its pyridoxal phosphate cofactor; CO(2) is released and the remaining methylamine moiety is then transferred to the lipoamide cofactor of the H protein. This chain is Probable glycine dehydrogenase (decarboxylating) subunit 2, found in Thermus thermophilus (strain ATCC BAA-163 / DSM 7039 / HB27).